A 100-amino-acid chain; its full sequence is Urease subunit gamma (100 aa).

Belongs to the urease gamma subunit family. In terms of assembly, heterotrimer of UreA (gamma), UreB (beta) and UreC (alpha) subunits. Three heterotrimers associate to form the active enzyme.

The protein localises to the cytoplasm. It catalyses the reaction urea + 2 H2O + H(+) = hydrogencarbonate + 2 NH4(+). The protein operates within nitrogen metabolism; urea degradation; CO(2) and NH(3) from urea (urease route): step 1/1. The protein is Urease subunit gamma of Haemophilus influenzae (strain PittGG).